We begin with the raw amino-acid sequence, 523 residues long: Arylsulfatase K (523 aa).

Positions 1 to 16 (MLRVFVLLIFNVNAYC) are cleaved as a signal peptide. 2 residues coordinate Ca(2+): aspartate 35 and cysteine 75. Residue cysteine 75 is the Nucleophile of the active site. Cysteine 75 carries the post-translational modification 3-oxoalanine (Cys). Asparagine 103 is a glycosylation site (N-linked (GlcNAc...) asparagine). The substrate site is built by lysine 123 and histidine 246. Residue asparagine 257 is glycosylated (N-linked (GlcNAc...) asparagine). Positions 308 and 309 each coordinate Ca(2+). Asparagine 405 is a glycosylation site (N-linked (GlcNAc...) asparagine).

Belongs to the sulfatase family. It depends on Ca(2+) as a cofactor. Post-translationally, the conversion to 3-oxoalanine (also known as C-formylglycine, FGly), of a serine or cysteine residue in prokaryotes and of a cysteine residue in eukaryotes, is critical for catalytic activity.

It is found in the secreted. Its subcellular location is the lysosome. The catalysed reaction is an aryl sulfate + H2O = a phenol + sulfate + H(+). It catalyses the reaction Hydrolysis of the 2-sulfate groups of the 2-O-sulfo-D-glucuronate residues of chondroitin sulfate, heparin and heparitin sulfate.. In terms of biological role, catalyzes the hydrolysis of pseudosubstrates such as p-nitrocatechol sulfate and p-nitrophenyl sulfate. Catalyzes the hydrolysis of the 2-sulfate groups of the 2-O-sulfo-D-glucuronate residues of chondroitin sulfate, heparin and heparitin sulfate. Acts selectively on 2-sulfoglucuronate and lacks activity against 2-sulfoiduronate. The protein is Arylsulfatase K (arsk) of Danio rerio (Zebrafish).